The sequence spans 63 residues: Large ribosomal subunit protein uL29 (63 aa).

This sequence belongs to the universal ribosomal protein uL29 family.

This chain is Large ribosomal subunit protein uL29, found in Glaesserella parasuis serovar 5 (strain SH0165) (Haemophilus parasuis).